The primary structure comprises 212 residues: uncharacterized protein (212 aa).

S-adenosyl-L-methionine-binding residues include Gly-53, Glu-74, and Asp-97.

The protein belongs to the methyltransferase superfamily. YrrT family.

Its function is as follows. Could be a S-adenosyl-L-methionine-dependent methyltransferase. This is an uncharacterized protein from Bacillus cereus (strain 03BB102).